A 279-amino-acid polypeptide reads, in one-letter code: UPF0173 metal-dependent hydrolase MXAN_1394 (279 aa).

It belongs to the UPF0173 family.

The chain is UPF0173 metal-dependent hydrolase MXAN_1394 from Myxococcus xanthus (strain DK1622).